The primary structure comprises 447 residues: N-succinylarginine dihydrolase (447 aa).

Substrate-binding positions include 19–28 (AGLSFGNEAS), asparagine 110, and 137–138 (HR). Glutamate 174 is a catalytic residue. A substrate-binding site is contributed by arginine 212. Residue histidine 248 is part of the active site. Residues aspartate 250 and asparagine 359 each contribute to the substrate site. The active-site Nucleophile is the cysteine 365.

The protein belongs to the succinylarginine dihydrolase family. As to quaternary structure, homodimer.

The catalysed reaction is N(2)-succinyl-L-arginine + 2 H2O + 2 H(+) = N(2)-succinyl-L-ornithine + 2 NH4(+) + CO2. It participates in amino-acid degradation; L-arginine degradation via AST pathway; L-glutamate and succinate from L-arginine: step 2/5. Functionally, catalyzes the hydrolysis of N(2)-succinylarginine into N(2)-succinylornithine, ammonia and CO(2). The polypeptide is N-succinylarginine dihydrolase (Escherichia coli O1:K1 / APEC).